A 603-amino-acid chain; its full sequence is ATP-dependent RNA helicase MRH4, mitochondrial (603 aa).

The transit peptide at 1 to 71 directs the protein to the mitochondrion; the sequence is MISTGLPLFT…GNGAGAGARV (71 aa). Residues 151-158 carry the Q motif motif; that stretch reads VIKPTPVQ. The Helicase ATP-binding domain maps to 193–409; that stretch reads KNEEQKTKIF…LRLFPDQKSL (217 aa). 206 to 213 contributes to the ATP binding site; it reads AETGSGKT. Residues 357-360 carry the DEAD box motif; the sequence is DEAD. One can recognise a Helicase C-terminal domain in the interval 443–603; that stretch reads CLAQAIYAIS…SAIMKGSRIG (161 aa).

The protein belongs to the DEAD box helicase family. MRH4 subfamily.

Its subcellular location is the mitochondrion. The catalysed reaction is ATP + H2O = ADP + phosphate + H(+). ATP-binding RNA helicase involved in mitochondrial RNA metabolism. Required for maintenance of mitochondrial DNA. In Lodderomyces elongisporus (strain ATCC 11503 / CBS 2605 / JCM 1781 / NBRC 1676 / NRRL YB-4239) (Yeast), this protein is ATP-dependent RNA helicase MRH4, mitochondrial (MRH4).